A 223-amino-acid chain; its full sequence is Phosphoenolpyruvate guanylyltransferase (223 aa).

Phosphoenolpyruvate-binding residues include Thr-140, Gly-156, and Ser-159.

Belongs to the CofC family.

It catalyses the reaction phosphoenolpyruvate + GTP + H(+) = enolpyruvoyl-2-diphospho-5'-guanosine + diphosphate. The protein operates within cofactor biosynthesis; coenzyme F420 biosynthesis. In terms of biological role, guanylyltransferase that catalyzes the activation of phosphoenolpyruvate (PEP) as enolpyruvoyl-2-diphospho-5'-guanosine, via the condensation of PEP with GTP. It is involved in the biosynthesis of coenzyme F420, a hydride carrier cofactor. This Conexibacter woesei (strain DSM 14684 / CCUG 47730 / CIP 108061 / JCM 11494 / NBRC 100937 / ID131577) protein is Phosphoenolpyruvate guanylyltransferase.